A 406-amino-acid chain; its full sequence is Bifunctional enzyme IspD/IspF (406 aa).

The tract at residues 1–246 (MTQMHSTQPM…KLSAGLLPDV (246 aa)) is 2-C-methyl-D-erythritol 4-phosphate cytidylyltransferase. A 2-C-methyl-D-erythritol 2,4-cyclodiphosphate synthase region spans residues 247-406 (RTGNGYDVHQ…ATVVYRGGRP (160 aa)). Residues Asp-253 and His-255 each contribute to the a divalent metal cation site. 4-CDP-2-C-methyl-D-erythritol 2-phosphate-binding positions include 253–255 (DVH) and 279–280 (HS). His-287 is an a divalent metal cation binding site. Residues 301 to 303 (DIG), 377 to 380 (TTNE), Phe-384, and Arg-387 contribute to the 4-CDP-2-C-methyl-D-erythritol 2-phosphate site.

It in the N-terminal section; belongs to the IspD/TarI cytidylyltransferase family. IspD subfamily. The protein in the C-terminal section; belongs to the IspF family. It depends on a divalent metal cation as a cofactor.

The enzyme catalyses 2-C-methyl-D-erythritol 4-phosphate + CTP + H(+) = 4-CDP-2-C-methyl-D-erythritol + diphosphate. The catalysed reaction is 4-CDP-2-C-methyl-D-erythritol 2-phosphate = 2-C-methyl-D-erythritol 2,4-cyclic diphosphate + CMP. It participates in isoprenoid biosynthesis; isopentenyl diphosphate biosynthesis via DXP pathway; isopentenyl diphosphate from 1-deoxy-D-xylulose 5-phosphate: step 2/6. It functions in the pathway isoprenoid biosynthesis; isopentenyl diphosphate biosynthesis via DXP pathway; isopentenyl diphosphate from 1-deoxy-D-xylulose 5-phosphate: step 4/6. Functionally, bifunctional enzyme that catalyzes the formation of 4-diphosphocytidyl-2-C-methyl-D-erythritol from CTP and 2-C-methyl-D-erythritol 4-phosphate (MEP) (IspD), and catalyzes the conversion of 4-diphosphocytidyl-2-C-methyl-D-erythritol 2-phosphate (CDP-ME2P) to 2-C-methyl-D-erythritol 2,4-cyclodiphosphate (ME-CPP) with a corresponding release of cytidine 5-monophosphate (CMP) (IspF). In Rhizobium rhizogenes (strain K84 / ATCC BAA-868) (Agrobacterium radiobacter), this protein is Bifunctional enzyme IspD/IspF.